Here is a 298-residue protein sequence, read N- to C-terminus: Glycine--tRNA ligase alpha subunit (298 aa).

Belongs to the class-II aminoacyl-tRNA synthetase family. Tetramer of two alpha and two beta subunits.

It is found in the cytoplasm. It catalyses the reaction tRNA(Gly) + glycine + ATP = glycyl-tRNA(Gly) + AMP + diphosphate. The protein is Glycine--tRNA ligase alpha subunit of Helicobacter pylori (strain G27).